The following is a 158-amino-acid chain: Pyruvoyl-dependent arginine decarboxylase (158 aa).

Position 44 is a pyruvic acid (Ser) (Ser-44).

It belongs to the PdaD family. Requires pyruvate as cofactor.

It catalyses the reaction L-arginine + H(+) = agmatine + CO2. The polypeptide is Pyruvoyl-dependent arginine decarboxylase (Pyrococcus horikoshii (strain ATCC 700860 / DSM 12428 / JCM 9974 / NBRC 100139 / OT-3)).